The sequence spans 414 residues: MCRGDSPGVAGGSGEHCLGGDDGDDGRPRLACVGAIARGFAHLWLQAATLGFVGSVVLSRGPYADAMSGAFVIGSTGLGFLRAPPAFARPPTRVCAWLRLVGGGAAVALWSLGEAGAPPGVPGPATQCLALGAAYAALLVLADDVHPLFLLAPRPLFVGTLGVVVGGLTIGGSARYWWIDPRAAAALTAAVVAGLGTTAAGDSFSKACPRHRRFCVVSAVESPPPRYAPEDAERPTDHGPLLPSTHHQRSPRVCGDGAARPENIWVPVVTFAGALALAACAARGSDAAPSGPVLPLWPQVFVGGHAAAGLTELCQTLAPRDLTDPLLFAYVGFQVVNHGLMFVVPDIAVYAMLGGAVWISLTQVLGLRRRLHKDPDAGPWAAATLRGLFFSVYALGFAAGVLVRPRMAASRRSG.

6 helical membrane-spanning segments follow: residues 39–59 (GFAH…VVLS), 61–81 (GPYA…LGFL), 96–116 (AWLR…GEAG), 121–141 (VPGP…LLVL), 148–168 (LFLL…VGGL), and 184–204 (AAAL…GDSF). A disordered region spans residues 225–253 (PRYAPEDAERPTDHGPLLPSTHHQRSPRV). Residues 228-237 (APEDAERPTD) show a composition bias toward basic and acidic residues. 2 helical membrane-spanning segments follow: residues 339–359 (GLMF…AVWI) and 383–403 (ATLR…GVLV).

Belongs to the alphaherpesvirinae HHV-1 UL43 family.

Its subcellular location is the membrane. In Homo sapiens (Human), this protein is Membrane protein UL43.